The primary structure comprises 466 residues: CBL-interacting protein kinase 20 (466 aa).

The region spanning 12–276 (YELGRSLGHG…IDELVKHPWF (265 aa)) is the Protein kinase domain. Residues 18–26 (LGHGTFSKV) and Lys41 each bind ATP. Catalysis depends on Asp139, which acts as the Proton acceptor. An activation loop region spans residues 162 to 191 (DFGLSALSASRRHDGLLHTTCGTPSYVAPE). An NAF domain is found at 297–329 (KPANAAMNMKPASLNAFDIISLSQGFDLSGMFC). The PPI stretch occupies residues 337–366 (TQDQLFVTGKPATAIVSRLEEIAETEHFTV). A disordered region spans residues 446–466 (ASEKNQLPAVSEVSPLSSPRN).

This sequence belongs to the protein kinase superfamily. CAMK Ser/Thr protein kinase family. SNF1 subfamily. The cofactor is Mn(2+).

It carries out the reaction L-seryl-[protein] + ATP = O-phospho-L-seryl-[protein] + ADP + H(+). It catalyses the reaction L-threonyl-[protein] + ATP = O-phospho-L-threonyl-[protein] + ADP + H(+). Its function is as follows. CIPK serine-threonine protein kinases interact with CBL proteins. Binding of a CBL protein to the regulatory NAF domain of CIPK protein lead to the activation of the kinase in a calcium-dependent manner. This chain is CBL-interacting protein kinase 20 (CIPK20), found in Oryza sativa subsp. japonica (Rice).